Reading from the N-terminus, the 144-residue chain is Probable low molecular weight protein-tyrosine-phosphatase AmsI (144 aa).

C9 acts as the Nucleophile in catalysis. R15 is an active-site residue. The Proton donor role is filled by D115.

This sequence belongs to the low molecular weight phosphotyrosine protein phosphatase family.

The enzyme catalyses O-phospho-L-tyrosyl-[protein] + H2O = L-tyrosyl-[protein] + phosphate. May function as a phosphatase required for amylovoran (an exopolysaccharide that functions as a virulence factor) production. The protein is Probable low molecular weight protein-tyrosine-phosphatase AmsI (amsI) of Erwinia amylovora (Fire blight bacteria).